The chain runs to 138 residues: Small ribosomal subunit protein uS11c (138 aa).

A disordered region spans residues 1 to 22 (MAKLLPRIGSRKNGRISSRKNA). Over residues 9 to 22 (GSRKNGRISSRKNA) the composition is skewed to basic residues.

It belongs to the universal ribosomal protein uS11 family. In terms of assembly, part of the 30S ribosomal subunit.

Its subcellular location is the plastid. The protein resides in the chloroplast. This Populus alba (White poplar) protein is Small ribosomal subunit protein uS11c.